Consider the following 107-residue polypeptide: FK506-binding protein 1 (107 aa).

The region spanning 19-107 (GSNVTVHHAG…VFEVELITFK (89 aa)) is the PPIase FKBP-type domain.

The protein belongs to the FKBP-type PPIase family.

The catalysed reaction is [protein]-peptidylproline (omega=180) = [protein]-peptidylproline (omega=0). Inhibited by both FK506 and rapamycin. Functionally, PPIases accelerate the folding of proteins by catalyzing the cis-trans isomerization of proline imidic peptide bonds in oligopeptides. The polypeptide is FK506-binding protein 1 (fkbp1) (Dictyostelium discoideum (Social amoeba)).